The sequence spans 815 residues: Lon protease 1 (815 aa).

The Lon N-terminal domain occupies 19 to 212 (MPLLPLRDIV…KLFGQIRSEI (194 aa)). 364 to 371 (GPPGVGKT) is a binding site for ATP. A Lon proteolytic domain is found at 601–782 (KDEIGLAVGL…DDVLRKAMVV (182 aa)). Active-site residues include S688 and K731. The tract at residues 793 to 815 (EAGAQQAVMFEQKPPAADEIRAH) is disordered.

The protein belongs to the peptidase S16 family. In terms of assembly, homohexamer. Organized in a ring with a central cavity.

It is found in the cytoplasm. It carries out the reaction Hydrolysis of proteins in presence of ATP.. ATP-dependent serine protease that mediates the selective degradation of mutant and abnormal proteins as well as certain short-lived regulatory proteins. Required for cellular homeostasis and for survival from DNA damage and developmental changes induced by stress. Degrades polypeptides processively to yield small peptide fragments that are 5 to 10 amino acids long. Binds to DNA in a double-stranded, site-specific manner. This chain is Lon protease 1, found in Syntrophobacter fumaroxidans (strain DSM 10017 / MPOB).